We begin with the raw amino-acid sequence, 242 residues long: Probable transcriptional regulatory protein Cphy_2507 (242 aa).

This sequence belongs to the TACO1 family.

The protein localises to the cytoplasm. The sequence is that of Probable transcriptional regulatory protein Cphy_2507 from Lachnoclostridium phytofermentans (strain ATCC 700394 / DSM 18823 / ISDg) (Clostridium phytofermentans).